We begin with the raw amino-acid sequence, 301 residues long: Quinolinate synthase (301 aa).

Iminosuccinate is bound by residues His21 and Ser38. Cys83 is a [4Fe-4S] cluster binding site. Residues 109 to 111 (YIN) and Ser126 contribute to the iminosuccinate site. Cys169 lines the [4Fe-4S] cluster pocket. Residues 195–197 (HPE) and Thr212 each bind iminosuccinate. Cys257 contributes to the [4Fe-4S] cluster binding site.

The protein belongs to the quinolinate synthase family. Type 2 subfamily. Requires [4Fe-4S] cluster as cofactor.

It is found in the cytoplasm. The enzyme catalyses iminosuccinate + dihydroxyacetone phosphate = quinolinate + phosphate + 2 H2O + H(+). It participates in cofactor biosynthesis; NAD(+) biosynthesis; quinolinate from iminoaspartate: step 1/1. Catalyzes the condensation of iminoaspartate with dihydroxyacetone phosphate to form quinolinate. The protein is Quinolinate synthase of Clostridium perfringens (strain 13 / Type A).